The sequence spans 95 residues: uncharacterized protein (95 aa).

This is an uncharacterized protein from Haemophilus influenzae (strain ATCC 51907 / DSM 11121 / KW20 / Rd).